Reading from the N-terminus, the 292-residue chain is Ribosomal protein L11 methyltransferase (292 aa).

The S-adenosyl-L-methionine site is built by Thr-144, Gly-165, Asp-187, and Asn-229.

The protein belongs to the methyltransferase superfamily. PrmA family.

Its subcellular location is the cytoplasm. It carries out the reaction L-lysyl-[protein] + 3 S-adenosyl-L-methionine = N(6),N(6),N(6)-trimethyl-L-lysyl-[protein] + 3 S-adenosyl-L-homocysteine + 3 H(+). Its function is as follows. Methylates ribosomal protein L11. This is Ribosomal protein L11 methyltransferase from Pseudomonas fluorescens (strain SBW25).